The following is a 114-amino-acid chain: RutC family protein YoaB (114 aa).

The protein belongs to the RutC family.

The protein is RutC family protein YoaB (yoaB) of Escherichia coli O6:H1 (strain CFT073 / ATCC 700928 / UPEC).